The sequence spans 236 residues: Giant extracellular hemoglobin linker 2 chain (236 aa).

The LDL-receptor class A domain occupies 66-108 (NGCEPRHFQCGGSAMECISDLLTCDGSPDCANGADEDSDVCHI). Intrachain disulfides connect Cys-68–Cys-82, Cys-75–Cys-95, and Cys-89–Cys-106.

Disulfide-linked dimer of identical chains. A model is proposed for the subunit structure of the Tylorrhynchus hemoglobin, consisting of 216 polypeptides chains, 192 heme-containing chains, and 24 linker chains.

In terms of biological role, acts as a linker for the assembly of heme-containing chains in the construction of giant hemoglobin. This is Giant extracellular hemoglobin linker 2 chain from Tylorrhynchus heterochetus (Japanese palolo worm).